The sequence spans 99 residues: A-type ATP synthase subunit F (99 aa).

This sequence belongs to the V-ATPase F subunit family. Has multiple subunits with at least A(3), B(3), C, D, E, F, H, I and proteolipid K(x).

The protein localises to the cell membrane. Component of the A-type ATP synthase that produces ATP from ADP in the presence of a proton gradient across the membrane. This Methanococcus maripaludis (strain C7 / ATCC BAA-1331) protein is A-type ATP synthase subunit F.